Here is a 294-residue protein sequence, read N- to C-terminus: ATP phosphoribosyltransferase (294 aa).

It belongs to the ATP phosphoribosyltransferase family. Long subfamily. The cofactor is Mg(2+).

It is found in the cytoplasm. The enzyme catalyses 1-(5-phospho-beta-D-ribosyl)-ATP + diphosphate = 5-phospho-alpha-D-ribose 1-diphosphate + ATP. The protein operates within amino-acid biosynthesis; L-histidine biosynthesis; L-histidine from 5-phospho-alpha-D-ribose 1-diphosphate: step 1/9. Its activity is regulated as follows. Feedback inhibited by histidine. Catalyzes the condensation of ATP and 5-phosphoribose 1-diphosphate to form N'-(5'-phosphoribosyl)-ATP (PR-ATP). Has a crucial role in the pathway because the rate of histidine biosynthesis seems to be controlled primarily by regulation of HisG enzymatic activity. In Chlorobium phaeobacteroides (strain DSM 266 / SMG 266 / 2430), this protein is ATP phosphoribosyltransferase.